The following is a 334-amino-acid chain: Holliday junction branch migration complex subunit RuvB (334 aa).

Residues 1 to 180 (MSEFLTPERT…FGIILELDFY (180 aa)) form a large ATPase domain (RuvB-L) region. ATP is bound by residues Leu19, Arg20, Gly61, Lys64, Thr65, Thr66, 127–129 (EDF), Arg170, Tyr180, and Arg217. A Mg(2+)-binding site is contributed by Thr65. Residues 181 to 251 (TVKELKEIIK…IVLKTMEVLN (71 aa)) are small ATPAse domain (RuvB-S). Residues 254 to 334 (AEGLDEFDRK…KYEVPENRLF (81 aa)) form a head domain (RuvB-H) region. Positions 309 and 314 each coordinate DNA.

It belongs to the RuvB family. Homohexamer. Forms an RuvA(8)-RuvB(12)-Holliday junction (HJ) complex. HJ DNA is sandwiched between 2 RuvA tetramers; dsDNA enters through RuvA and exits via RuvB. An RuvB hexamer assembles on each DNA strand where it exits the tetramer. Each RuvB hexamer is contacted by two RuvA subunits (via domain III) on 2 adjacent RuvB subunits; this complex drives branch migration. In the full resolvosome a probable DNA-RuvA(4)-RuvB(12)-RuvC(2) complex forms which resolves the HJ.

It is found in the cytoplasm. It carries out the reaction ATP + H2O = ADP + phosphate + H(+). In terms of biological role, the RuvA-RuvB-RuvC complex processes Holliday junction (HJ) DNA during genetic recombination and DNA repair, while the RuvA-RuvB complex plays an important role in the rescue of blocked DNA replication forks via replication fork reversal (RFR). RuvA specifically binds to HJ cruciform DNA, conferring on it an open structure. The RuvB hexamer acts as an ATP-dependent pump, pulling dsDNA into and through the RuvAB complex. RuvB forms 2 homohexamers on either side of HJ DNA bound by 1 or 2 RuvA tetramers; 4 subunits per hexamer contact DNA at a time. Coordinated motions by a converter formed by DNA-disengaged RuvB subunits stimulates ATP hydrolysis and nucleotide exchange. Immobilization of the converter enables RuvB to convert the ATP-contained energy into a lever motion, pulling 2 nucleotides of DNA out of the RuvA tetramer per ATP hydrolyzed, thus driving DNA branch migration. The RuvB motors rotate together with the DNA substrate, which together with the progressing nucleotide cycle form the mechanistic basis for DNA recombination by continuous HJ branch migration. Branch migration allows RuvC to scan DNA until it finds its consensus sequence, where it cleaves and resolves cruciform DNA. The protein is Holliday junction branch migration complex subunit RuvB of Thermotoga petrophila (strain ATCC BAA-488 / DSM 13995 / JCM 10881 / RKU-1).